Consider the following 537-residue polypeptide: Ribonuclease III domain-containing protein RNC1, chloroplastic (537 aa).

A chloroplast-targeting transit peptide spans M1 to C51. 2 consecutive RNase III domains span residues L141 to G283 and E415 to G515.

As to quaternary structure, interacts with RNA. Part of large ribonucleo-protein particles that contain CAF1 and/or CAF2.

It is found in the plastid. Its subcellular location is the chloroplast. Functionally, binds specific group II introns in chloroplasts and facilitates their splicing. Acts on both subgroup IIA and subgroup IIB introns. The substrates of the subgroup II also require the CRM domain proteins CAF1 or CAF2. Binds both single-stranded and double-stranded RNA non-specifically, but lacks endonuclease activity. Required for plastid ribosome biogenesis. The protein is Ribonuclease III domain-containing protein RNC1, chloroplastic of Arabidopsis thaliana (Mouse-ear cress).